The primary structure comprises 803 residues: Phenylalanine--tRNA ligase beta subunit (803 aa).

The 112-residue stretch at 39 to 150 (AKVLAPFTIA…ADAPVGAAYA (112 aa)) folds into the tRNA-binding domain. A B5 domain is found at 400-475 (ADDKIIDFPL…RIVGVDKVPL (76 aa)). Mg(2+)-binding residues include Asp-453, Asp-459, Glu-462, and Glu-463. An FDX-ACB domain is found at 709–802 (SAFHPVSRDF…VTKKTGGSLR (94 aa)).

This sequence belongs to the phenylalanyl-tRNA synthetase beta subunit family. Type 1 subfamily. In terms of assembly, tetramer of two alpha and two beta subunits. It depends on Mg(2+) as a cofactor.

Its subcellular location is the cytoplasm. The catalysed reaction is tRNA(Phe) + L-phenylalanine + ATP = L-phenylalanyl-tRNA(Phe) + AMP + diphosphate + H(+). The protein is Phenylalanine--tRNA ligase beta subunit of Rhodopseudomonas palustris (strain ATCC BAA-98 / CGA009).